The following is a 368-amino-acid chain: Outer membrane protein assembly factor BamC (368 aa).

Residues 1–18 form the signal peptide; the sequence is MTTKFFIGTAIAVSVLSA. The N-palmitoyl cysteine moiety is linked to residue Cys-19. The S-diacylglycerol cysteine moiety is linked to residue Cys-19.

Belongs to the BamC family. Part of the Bam complex.

It is found in the cell outer membrane. In terms of biological role, part of the outer membrane protein assembly complex, which is involved in assembly and insertion of beta-barrel proteins into the outer membrane. This is Outer membrane protein assembly factor BamC from Pseudoalteromonas atlantica (strain T6c / ATCC BAA-1087).